Consider the following 215-residue polypeptide: Thiamine-phosphate synthase 1 (215 aa).

Residues 35 to 39 (QYRFE) and Asn-67 contribute to the 4-amino-2-methyl-5-(diphosphooxymethyl)pyrimidine site. 2 residues coordinate Mg(2+): Asp-68 and Asp-87. Thr-106 lines the 4-amino-2-methyl-5-(diphosphooxymethyl)pyrimidine pocket. Position 132–134 (132–134 (TST)) interacts with 2-[(2R,5Z)-2-carboxy-4-methylthiazol-5(2H)-ylidene]ethyl phosphate. 4-amino-2-methyl-5-(diphosphooxymethyl)pyrimidine is bound at residue Lys-135. Position 162 (Gly-162) interacts with 2-[(2R,5Z)-2-carboxy-4-methylthiazol-5(2H)-ylidene]ethyl phosphate.

The protein belongs to the thiamine-phosphate synthase family. Mg(2+) serves as cofactor.

The catalysed reaction is 2-[(2R,5Z)-2-carboxy-4-methylthiazol-5(2H)-ylidene]ethyl phosphate + 4-amino-2-methyl-5-(diphosphooxymethyl)pyrimidine + 2 H(+) = thiamine phosphate + CO2 + diphosphate. It carries out the reaction 2-(2-carboxy-4-methylthiazol-5-yl)ethyl phosphate + 4-amino-2-methyl-5-(diphosphooxymethyl)pyrimidine + 2 H(+) = thiamine phosphate + CO2 + diphosphate. It catalyses the reaction 4-methyl-5-(2-phosphooxyethyl)-thiazole + 4-amino-2-methyl-5-(diphosphooxymethyl)pyrimidine + H(+) = thiamine phosphate + diphosphate. Its pathway is cofactor biosynthesis; thiamine diphosphate biosynthesis; thiamine phosphate from 4-amino-2-methyl-5-diphosphomethylpyrimidine and 4-methyl-5-(2-phosphoethyl)-thiazole: step 1/1. Condenses 4-methyl-5-(beta-hydroxyethyl)thiazole monophosphate (THZ-P) and 2-methyl-4-amino-5-hydroxymethyl pyrimidine pyrophosphate (HMP-PP) to form thiamine monophosphate (TMP). The sequence is that of Thiamine-phosphate synthase 1 from Aquifex aeolicus (strain VF5).